Reading from the N-terminus, the 101-residue chain is Small ribosomal subunit protein uS14 (101 aa).

A compositionally biased stretch (basic and acidic residues) spans 1–11 (MAKKSAIETNE). A disordered region spans residues 1 to 24 (MAKKSAIETNERRRKLSQSKAAKR). Basic residues predominate over residues 12-24 (RRRKLSQSKAAKR).

This sequence belongs to the universal ribosomal protein uS14 family. Part of the 30S ribosomal subunit. Contacts proteins S3 and S10.

In terms of biological role, binds 16S rRNA, required for the assembly of 30S particles and may also be responsible for determining the conformation of the 16S rRNA at the A site. The polypeptide is Small ribosomal subunit protein uS14 (Azorhizobium caulinodans (strain ATCC 43989 / DSM 5975 / JCM 20966 / LMG 6465 / NBRC 14845 / NCIMB 13405 / ORS 571)).